A 317-amino-acid chain; its full sequence is Acetyl-coenzyme A carboxylase carboxyl transferase subunit alpha (317 aa).

Positions 43–293 constitute a CoA carboxyltransferase C-terminal domain; sequence RVRESMADIY…GDVISNALGE (251 aa).

The protein belongs to the AccA family. As to quaternary structure, acetyl-CoA carboxylase is a heterohexamer composed of biotin carboxyl carrier protein (AccB), biotin carboxylase (AccC) and two subunits each of ACCase subunit alpha (AccA) and ACCase subunit beta (AccD).

Its subcellular location is the cytoplasm. The enzyme catalyses N(6)-carboxybiotinyl-L-lysyl-[protein] + acetyl-CoA = N(6)-biotinyl-L-lysyl-[protein] + malonyl-CoA. Its pathway is lipid metabolism; malonyl-CoA biosynthesis; malonyl-CoA from acetyl-CoA: step 1/1. Component of the acetyl coenzyme A carboxylase (ACC) complex. First, biotin carboxylase catalyzes the carboxylation of biotin on its carrier protein (BCCP) and then the CO(2) group is transferred by the carboxyltransferase to acetyl-CoA to form malonyl-CoA. This chain is Acetyl-coenzyme A carboxylase carboxyl transferase subunit alpha, found in Rhizobium rhizogenes (strain K84 / ATCC BAA-868) (Agrobacterium radiobacter).